A 145-amino-acid chain; its full sequence is Aspartate 1-decarboxylase (145 aa).

Serine 26 (schiff-base intermediate with substrate; via pyruvic acid) is an active-site residue. At serine 26 the chain carries Pyruvic acid (Ser). Threonine 58 contributes to the substrate binding site. Tyrosine 59 acts as the Proton donor in catalysis. 74-76 (GGA) contributes to the substrate binding site.

It belongs to the PanD family. In terms of assembly, heterooctamer of four alpha and four beta subunits. The cofactor is pyruvate. Post-translationally, is synthesized initially as an inactive proenzyme, which is activated by self-cleavage at a specific serine bond to produce a beta-subunit with a hydroxyl group at its C-terminus and an alpha-subunit with a pyruvoyl group at its N-terminus.

It localises to the cytoplasm. It carries out the reaction L-aspartate + H(+) = beta-alanine + CO2. Its pathway is cofactor biosynthesis; (R)-pantothenate biosynthesis; beta-alanine from L-aspartate: step 1/1. Catalyzes the pyruvoyl-dependent decarboxylation of aspartate to produce beta-alanine. The protein is Aspartate 1-decarboxylase of Synechocystis sp. (strain ATCC 27184 / PCC 6803 / Kazusa).